Here is a 776-residue protein sequence, read N- to C-terminus: Venom dipeptidyl peptidase 4 (776 aa).

An N-terminal signal peptide occupies residues 1–19 (MVPLRSFVLLNGLFFVLLA). 3 N-linked (GlcNAc...) asparagine glycosylation sites follow: asparagine 44, asparagine 66, and asparagine 329. Intrachain disulfides connect cysteine 449/cysteine 452 and cysteine 462/cysteine 480. Residues asparagine 504 and asparagine 577 are each glycosylated (N-linked (GlcNAc...) asparagine). Serine 638 (charge relay system) is an active-site residue. A disulfide bridge links cysteine 658 with cysteine 769. Asparagine 693 carries N-linked (GlcNAc...) asparagine glycosylation. Active-site charge relay system residues include aspartate 717 and histidine 749.

Belongs to the peptidase S9B family. DPPIV subfamily. Expressed by the venom gland.

It localises to the secreted. It carries out the reaction Release of an N-terminal dipeptide, Xaa-Yaa-|-Zaa-, from a polypeptide, preferentially when Yaa is Pro, provided Zaa is neither Pro nor hydroxyproline.. Functionally, venom dipeptidyl-peptidase which removes N-terminal dipeptides sequentially from polypeptides having unsubstituted N-termini provided that the penultimate residue is proline. May process venom proteins into their active forms and/or modulate the chemotactic activity of immune cells after the insect sting. This is Venom dipeptidyl peptidase 4 from Vespa velutina (Asian yellow-legged hornet).